Here is a 272-residue protein sequence, read N- to C-terminus: ATP synthase subunit a (272 aa).

The next 5 membrane-spanning stretches (helical) occupy residues 41 to 61, 101 to 121, 147 to 167, 212 to 232, and 243 to 263; these read TLNI…LVLF, LIAP…LMDL, DVNI…FYSI, LFGN…LLPW, and AIFH…LTIV.

It belongs to the ATPase A chain family. As to quaternary structure, F-type ATPases have 2 components, CF(1) - the catalytic core - and CF(0) - the membrane proton channel. CF(1) has five subunits: alpha(3), beta(3), gamma(1), delta(1), epsilon(1). CF(0) has three main subunits: a(1), b(2) and c(9-12). The alpha and beta chains form an alternating ring which encloses part of the gamma chain. CF(1) is attached to CF(0) by a central stalk formed by the gamma and epsilon chains, while a peripheral stalk is formed by the delta and b chains.

The protein localises to the cell inner membrane. Functionally, key component of the proton channel; it plays a direct role in the translocation of protons across the membrane. In Cronobacter sakazakii (strain ATCC BAA-894) (Enterobacter sakazakii), this protein is ATP synthase subunit a.